A 320-amino-acid polypeptide reads, in one-letter code: MTLTASPTAARTPAEEKARFEGNKLAKRLARETTRAIADYNMIEAGDKVMVCLSGGKDSYALLDILLSLQKRAPFAFEIIAVNLDQKQPGFPPEILPDYLRALGVPFHIETQDTYSIVTRVIPEGKTMCSLCSRLRRGILYRVASELGATKIALGHHRDDILGTFFLNLFYGGKAKGMPPKLVSDDGRHTVIRPLAYVPESDLIAYAQFKQFPIIPCNLCGSQENLKRKEVGRMIQEWDRKHPGRSWNVFNALSRVVPSHLMDRDLFDFVGLKPTGVADAGGDTAFDQIDPEPDTAGPGCASDAPAGQADGMAEQRVVFR.

The PP-loop motif motif lies at 54-59; it reads SGGKDS. [4Fe-4S] cluster contacts are provided by Cys-129, Cys-132, and Cys-220.

This sequence belongs to the TtcA family. As to quaternary structure, homodimer. Requires Mg(2+) as cofactor. [4Fe-4S] cluster serves as cofactor.

The protein resides in the cytoplasm. It carries out the reaction cytidine(32) in tRNA + S-sulfanyl-L-cysteinyl-[cysteine desulfurase] + AH2 + ATP = 2-thiocytidine(32) in tRNA + L-cysteinyl-[cysteine desulfurase] + A + AMP + diphosphate + H(+). It participates in tRNA modification. In terms of biological role, catalyzes the ATP-dependent 2-thiolation of cytidine in position 32 of tRNA, to form 2-thiocytidine (s(2)C32). The sulfur atoms are provided by the cysteine/cysteine desulfurase (IscS) system. This is tRNA-cytidine(32) 2-sulfurtransferase from Bordetella bronchiseptica (strain ATCC BAA-588 / NCTC 13252 / RB50) (Alcaligenes bronchisepticus).